Here is a 254-residue protein sequence, read N- to C-terminus: tRNA (guanine-N(1)-)-methyltransferase (254 aa).

S-adenosyl-L-methionine-binding positions include G121 and 141 to 146 (LGDYVL).

It belongs to the RNA methyltransferase TrmD family. In terms of assembly, homodimer.

It localises to the cytoplasm. It carries out the reaction guanosine(37) in tRNA + S-adenosyl-L-methionine = N(1)-methylguanosine(37) in tRNA + S-adenosyl-L-homocysteine + H(+). Specifically methylates guanosine-37 in various tRNAs. This is tRNA (guanine-N(1)-)-methyltransferase from Psychrobacter cryohalolentis (strain ATCC BAA-1226 / DSM 17306 / VKM B-2378 / K5).